Here is a 235-residue protein sequence, read N- to C-terminus: Octanoyltransferase (235 aa).

The BPL/LPL catalytic domain maps to 52–229 (KNRQASMIFC…SICSALEYIN (178 aa)). Residues 89–96 (RGGKITWH), 159–161 (AIG), and 172–174 (GFA) contribute to the substrate site. The active-site Acyl-thioester intermediate is Cys190.

Belongs to the LipB family.

The protein localises to the cytoplasm. The enzyme catalyses octanoyl-[ACP] + L-lysyl-[protein] = N(6)-octanoyl-L-lysyl-[protein] + holo-[ACP] + H(+). The protein operates within protein modification; protein lipoylation via endogenous pathway; protein N(6)-(lipoyl)lysine from octanoyl-[acyl-carrier-protein]: step 1/2. In terms of biological role, catalyzes the transfer of endogenously produced octanoic acid from octanoyl-acyl-carrier-protein onto the lipoyl domains of lipoate-dependent enzymes. Lipoyl-ACP can also act as a substrate although octanoyl-ACP is likely to be the physiological substrate. The polypeptide is Octanoyltransferase (Tropheryma whipplei (strain Twist) (Whipple's bacillus)).